The primary structure comprises 310 residues: MTALSRTPVFDAADTAALLDYPALLATLARTVADYAAGEIVSPERLVVPLQAGGVMLSMPSSAHDLAIHKLVNVCPGNAARGLPTILGQVIACDATTGEMRFVLDGPTVTGRRTAAVTALGVQALHGTPREILLIGTGKQAANHAEAFTALFPDARLHVRGSRAASAAEFCAAHRAHAPQLMPLDGDAIPDAIDVVVTLTTSRTPVYRDAAREGRLVVGVGAFTADAAEIAADTVRRSRLVVDDPAGARHEAGDLIVANVDWQQVASLADVLNGTFARGGPMLFKTVGCAAWDLAACRTARDALAAREQR.

This sequence belongs to the ornithine cyclodeaminase/mu-crystallin family.

The catalysed reaction is L-proline + NAD(+) = 1-pyrroline-2-carboxylate + NADH + H(+). The enzyme catalyses L-proline + NADP(+) = 1-pyrroline-2-carboxylate + NADPH + H(+). Catalyzes the reduction of Delta(1)-pyrroline-2-carboxylate (Pyr2C) to L-proline, using NADPH as the electron donor. May be involved in a degradation pathway that converts trans-3-hydroxy-L-proline (t3LHyp) to L-proline. In Burkholderia multivorans (strain ATCC 17616 / 249), this protein is Delta(1)-pyrroline-2-carboxylate reductase 1.